The primary structure comprises 196 residues: Dual-action ribosomal maturation protein DarP (196 aa).

It belongs to the DarP family.

It localises to the cytoplasm. Member of a network of 50S ribosomal subunit biogenesis factors which assembles along the 30S-50S interface, preventing incorrect 23S rRNA structures from forming. Promotes peptidyl transferase center (PTC) maturation. This Stenotrophomonas maltophilia (strain R551-3) protein is Dual-action ribosomal maturation protein DarP.